Here is a 676-residue protein sequence, read N- to C-terminus: Envelope glycoprotein (676 aa).

The first 32 residues, 1–32 (MGVTGILQLPRDRFKRTSFFLWVIILFQRTFS), serve as a signal peptide directing secretion. At 33–650 (IPLGVIHNST…NDNWWTGWRQ (618 aa)) the chain is on the extracellular side. Residue asparagine 40 is glycosylated (N-linked (GlcNAc...) asparagine; by host). Intrachain disulfides connect cysteine 53-cysteine 609, cysteine 108-cysteine 135, cysteine 121-cysteine 147, cysteine 511-cysteine 556, and cysteine 601-cysteine 608. Residues 54–201 (RDKLSSTNQL…DFFSSHPLRE (148 aa)) form a receptor-binding region. 11 N-linked (GlcNAc...) asparagine; by host glycosylation sites follow: asparagine 204, asparagine 228, asparagine 238, asparagine 257, asparagine 268, asparagine 296, asparagine 317, asparagine 333, asparagine 346, asparagine 386, and asparagine 413. Positions 305–485 (ELSFTVVSNG…SGKLGLITNT (181 aa)) are mucin-like region. The segment covering 315 to 335 (AKNISGQSPARTSSDPGTNTT) has biased composition (polar residues). Residues 315-337 (AKNISGQSPARTSSDPGTNTTTE) form a disordered region. Polar residues predominate over residues 373-391 (TSPQSLTTKPGPDNSTHNT). Disordered regions lie at residues 373–392 (TSPQSLTTKPGPDNSTHNTP) and 402–479 (TQVE…SGKL). Over residues 414–432 (DSTASDTPSATTAAGPPKA) the composition is skewed to low complexity. A compositionally biased stretch (polar residues) spans 433-464 (ENTNTSKSTDFLDPATTTSPQNHSETAGNNNT). Residues asparagine 436, asparagine 454, and asparagine 462 are each glycosylated (N-linked (GlcNAc...) asparagine; by host). The tract at residues 524–539 (GAAIGLAWIPYFGPAA) is fusion peptide. Residues 554-595 (LICGLRQLANETTQALQLFLRATTELRTFSILNRKAIDFLLQ) adopt a coiled-coil conformation. The N-linked (GlcNAc...) asparagine; by host glycan is linked to asparagine 563. A coiled-coil region spans residues 615-634 (WTKNITDKIDQIIHDFVDKT). Asparagine 618 is a glycosylation site (N-linked (GlcNAc...) asparagine; by host). The helical transmembrane segment at 651 to 671 (WIPAGIGVTGVIIAVIALFCI) threads the bilayer. The Important role for host BST2/tetherin antagonism signature appears at 660–664 (GVIIA). S-palmitoyl cysteine; by host attachment occurs at residues cysteine 670 and cysteine 672. At 672–676 (CKFVF) the chain is on the cytoplasmic side.

Belongs to the filoviruses glycoprotein family. Homotrimer; each monomer consists of a GP1 and a GP2 subunit linked by disulfide bonds. The resulting peplomers (GP1,2) protrude from the virus surface as spikes. Interacts with host integrin alpha-V/ITGAV. Interacts with host CLEC10A. Also binds to host CD209 and CLEC4M/DC-SIGN(R). Interacts with host FOLR1. Interacts with BST2; this interaction inhibits the antiviral effect of BST2 and this allows viral release from infected cells. Interacts with host FCN1; this interaction enhances viral entry. Interacts with host TLR4; this interaction induces cell death in T-lymphocytes or proinflammatory cytokines and SOCS1 production in monocytes. As to quaternary structure, interacts with host entry receptor NPC1. In terms of assembly, GP1 and GP2delta are part of GP1,2delta soluble complexes released by ectodomain shedding. The signal peptide region modulates GP's high mannose glycosylation, thereby determining the efficiency of the interactions with DC-SIGN(R). In terms of processing, N-glycosylated. Post-translationally, glycosylated; glycosylation is essential for the activation of dendritic cells and macrophages. O-glycosylated in the mucin-like region. In terms of processing, palmitoylation is not required for its function. Post-translationally, specific enzymatic cleavages in vivo yield mature proteins. The precursor is processed into GP1 and GP2 by host cell furin in the trans Golgi, and maybe by other host proteases, to yield the mature GP1 and GP2 proteins. The cleavage site corresponds to the furin optimal cleavage sequence [KR]-X-[KR]-R. This cleavage does not seem to be required for function. After the internalization of the virus into cell endosomes, GP1 C-terminus is removed by the endosomal proteases cathepsin B, cathepsin L, or both, leaving a 19-kDa N-terminal fragment which is further digested by cathepsin B. This cleaved 19-kDa GP1 can then bind to the host entry receptor NPC1. Proteolytic processing of GP1,2 by host ADAM17 can remove the transmembrane anchor of GP2 and leads to shedding of complexes consisting in GP1 and truncated GP2 (GP1,2delta).

The protein resides in the virion membrane. Its subcellular location is the host cell membrane. It is found in the secreted. Trimeric GP1,2 complexes form the virion surface spikes and mediate the viral entry processes, with GP1 acting as the receptor-binding subunit and GP2 as the membrane fusion subunit. At later times of infection, down-regulates the expression of various host cell surface molecules that are essential for immune surveillance and cell adhesion. Down-modulates several integrins including ITGA1, ITGA2, ITGA3, ITGA4, ITGA5, ITGA6, ITGAV and ITGB1. This decrease in cell adhesion molecules may lead to cell detachment, contributing to the disruption of blood vessel integrity and hemorrhages developed during infection (cytotoxicity). Interacts with host TLR4 and thereby stimulates the differentiation and activation of monocytes leading to bystander death of T-lymphocytes. Down-regulates as well the function of host natural killer cells. Counteracts the antiviral effect of host BST2/tetherin that restricts release of progeny virions from infected cells. However, cooperates with VP40 and host BST2 to activate canonical NF-kappa-B pathway in a manner dependent on neddylation. In terms of biological role, functions as a decoy for anti-GP1,2 antibodies thereby contributing to viral immune evasion. Interacts and activates host macrophages and dendritic cells inducing up-regulation of cytokine transcription. This effect is mediated throught activation of host TLR4. Its function is as follows. Responsible for binding to the receptor(s) on target cells. Interacts with CD209/DC-SIGN and CLEC4M/DC-SIGNR which act as cofactors for virus entry into dendritic cells (DCs) and endothelial cells. Binding to the macrophage specific lectin CLEC10A also seems to enhance virus infectivity. Interaction with FOLR1/folate receptor alpha may be a cofactor for virus entry in some cell types, although results are contradictory. Members of the Tyro3 receptor tyrosine kinase family also seem to be cell entry factors in filovirus infection. Once attached, the virions are internalized through clathrin-dependent endocytosis and/or macropinocytosis. After internalization of the virus into the endosomes of the host cell, proteolysis of GP1 by two cysteine proteases, CTSB/cathepsin B and CTSL/cathepsin L removes the glycan cap and allows GP1 binding to the host entry receptor NPC1. NPC1-binding, Ca(2+) and acidic pH induce a conformational change of GP2, which unmasks its fusion peptide and permit membranes fusion. Functionally, acts as a class I viral fusion protein. Under the current model, the protein has at least 3 conformational states: pre-fusion native state, pre-hairpin intermediate state, and post-fusion hairpin state. During viral and target cell membrane fusion, the coiled coil regions (heptad repeats) assume a trimer-of-hairpins structure, positioning the fusion peptide in close proximity to the C-terminal region of the ectodomain. The formation of this structure appears to drive apposition and subsequent fusion of viral and target cell membranes. Responsible for penetration of the virus into the cell cytoplasm by mediating the fusion of the membrane of the endocytosed virus particle with the endosomal membrane. Low pH in endosomes induces an irreversible conformational change in GP2, releasing the fusion hydrophobic peptide. This is Envelope glycoprotein (GP) from Epomops franqueti (Franquet's epauletted fruit bat).